The primary structure comprises 916 residues: Alanine--tRNA ligase (916 aa).

The Zn(2+) site is built by His-611, His-615, Cys-714, and His-718.

Belongs to the class-II aminoacyl-tRNA synthetase family. The cofactor is Zn(2+).

It is found in the cytoplasm. It carries out the reaction tRNA(Ala) + L-alanine + ATP = L-alanyl-tRNA(Ala) + AMP + diphosphate. Its function is as follows. Catalyzes the attachment of alanine to tRNA(Ala) in a two-step reaction: alanine is first activated by ATP to form Ala-AMP and then transferred to the acceptor end of tRNA(Ala). Also edits incorrectly charged Ser-tRNA(Ala) and Gly-tRNA(Ala) via its editing domain. The polypeptide is Alanine--tRNA ligase (Methanospirillum hungatei JF-1 (strain ATCC 27890 / DSM 864 / NBRC 100397 / JF-1)).